Here is a 229-residue protein sequence, read N- to C-terminus: 5'-methylthioadenosine/S-adenosylhomocysteine nucleosidase (229 aa).

The active-site Proton acceptor is the glutamate 12. Substrate contacts are provided by residues glycine 78, isoleucine 152, and 173-174 (ME). Catalysis depends on aspartate 197, which acts as the Proton donor.

Belongs to the PNP/UDP phosphorylase family. MtnN subfamily.

It catalyses the reaction S-adenosyl-L-homocysteine + H2O = S-(5-deoxy-D-ribos-5-yl)-L-homocysteine + adenine. The enzyme catalyses S-methyl-5'-thioadenosine + H2O = 5-(methylsulfanyl)-D-ribose + adenine. It carries out the reaction 5'-deoxyadenosine + H2O = 5-deoxy-D-ribose + adenine. It participates in amino-acid biosynthesis; L-methionine biosynthesis via salvage pathway; S-methyl-5-thio-alpha-D-ribose 1-phosphate from S-methyl-5'-thioadenosine (hydrolase route): step 1/2. Functionally, catalyzes the irreversible cleavage of the glycosidic bond in both 5'-methylthioadenosine (MTA) and S-adenosylhomocysteine (SAH/AdoHcy) to adenine and the corresponding thioribose, 5'-methylthioribose and S-ribosylhomocysteine, respectively. Also cleaves 5'-deoxyadenosine, a toxic by-product of radical S-adenosylmethionine (SAM) enzymes, into 5-deoxyribose and adenine. The polypeptide is 5'-methylthioadenosine/S-adenosylhomocysteine nucleosidase (Haemophilus influenzae (strain PittGG)).